A 543-amino-acid chain; its full sequence is Chaperonin GroEL 2 (543 aa).

ATP is bound by residues 29–32 (TLGP), 86–90 (DGTTT), Gly-413, 479–481 (NAA), and Asp-495.

Belongs to the chaperonin (HSP60) family. Forms a cylinder of 14 subunits composed of two heptameric rings stacked back-to-back. Interacts with the co-chaperonin GroES.

It localises to the cytoplasm. It carries out the reaction ATP + H2O + a folded polypeptide = ADP + phosphate + an unfolded polypeptide.. Together with its co-chaperonin GroES, plays an essential role in assisting protein folding. The GroEL-GroES system forms a nano-cage that allows encapsulation of the non-native substrate proteins and provides a physical environment optimized to promote and accelerate protein folding. The protein is Chaperonin GroEL 2 of Prochlorococcus marinus (strain NATL1A).